Here is a 653-residue protein sequence, read N- to C-terminus: Polyadenylate-binding protein, cytoplasmic and nuclear (653 aa).

Basic and acidic residues predominate over residues 1–10; sequence MPSTDLKKQA. A disordered region spans residues 1–77; the sequence is MPSTDLKKQA…SVATPSGTAP (77 aa). Over residues 17 to 27 the composition is skewed to polar residues; sequence DVNTNNEAVES. Over residues 53–68 the composition is skewed to low complexity; that stretch reads AAEPSESTSTPTNASS. One can recognise an RRM 1 domain in the interval 80-158; that stretch reads ASLYVGELDP…RPCRIMWSQR (79 aa). A Phosphothreonine modification is found at threonine 167. 3 consecutive RRM domains span residues 168-245, 261-338, and 364-441; these read GNVF…HHVS, TNVY…RAQK, and VNLF…LAQR. The 78-residue stretch at 569-646 folds into the PABC domain; sequence PERFTAADLA…AIGVLQEFVD (78 aa).

The protein belongs to the polyadenylate-binding protein type-1 family. Interacts with cid13.

The protein localises to the cytoplasm. Its subcellular location is the nucleus. Its function is as follows. Binds the poly(A) tail of mRNA. Appears to be an important mediator of the multiple roles of the poly(A) tail in mRNA biogenesis, stability and translation. In the nucleus, involved in both mRNA cleavage and polyadenylation. Is also required for efficient mRNA export to the cytoplasm. Acts in concert with a poly(A)-specific nuclease (PAN) to affect poly(A) tail shortening, which may occur concomitantly with either nucleocytoplasmic mRNA transport or translational initiation. In the cytoplasm, stimulates translation initiation and regulates mRNA decay through translation termination-coupled poly(A) shortening, probably mediated by PAN. This chain is Polyadenylate-binding protein, cytoplasmic and nuclear (pab1), found in Schizosaccharomyces pombe (strain 972 / ATCC 24843) (Fission yeast).